The primary structure comprises 670 residues: Receptor for retinol uptake stra6 (670 aa).

Residues 1 to 38 are Extracellular-facing; sequence MSAETVNNYDYSDWYENAAPTKAPVEVIPPCDPTADEG. The chain crosses the membrane as a helical span at residues 39–59; sequence LFHICIAAISLVVMLVLAILA. The Cytoplasmic segment spans residues 60 to 87; sequence RRQKLSDNQRGLTGLLSPVNFLDHTQHK. The chain crosses the membrane as a helical span at residues 88-108; the sequence is GLAVAVYGVLFCKLVGMVLSH. At 109-121 the chain is on the extracellular side; that stretch reads HPLPFTKEVANKE. A helical transmembrane segment spans residues 122 to 142; the sequence is FWMILALLYYPALYYPLLACG. Residues 143 to 145 are Cytoplasmic-facing; the sequence is TLH. Residues 146-166 form a helical membrane-spanning segment; the sequence is NKVGYVLGSLLSWTHFGILVW. At 167 to 182 the chain is on the extracellular side; sequence QKVDCPKTPQIYKYYA. The helical transmembrane segment at 183–203 threads the bilayer; the sequence is LFGSLPQIACLAFLSFQYPLL. Residues 204 to 274 lie on the Cytoplasmic side of the membrane; that stretch reads LFKGLQNTET…PEDVFRFPLK (71 aa). A helical transmembrane segment spans residues 275–295; that stretch reads LAISVVVAFIALYQMALLLIS. At 296 to 346 the chain is on the extracellular side; it reads GVLPTLHIVRRGVDENIAFLLAGFNIILSNDRQEVVRIVVYYLWCVEICYV. A helical membrane pass occupies residues 347–367; the sequence is SAVTLSCLVNLLMLMRSMVLH. Residues 368–401 are Cytoplasmic-facing; the sequence is RSNLKGLYRGDSLNVFNCHRSIRPSRPALVCWMG. Residues 402-422 traverse the membrane as a helical segment; that stretch reads FTSYQAAFLCLGMAIQTLVFF. Residues 423-452 lie on the Extracellular side of the membrane; that stretch reads ICILFAVFLIIIPILWGTNLMLFHIIGNLW. The chain crosses the membrane as a helical span at residues 453–473; that stretch reads PFWLTLVLAALIQHVASRFLF. At 474–488 the chain is on the cytoplasmic side; it reads IRKDGGTRDLNNRGS. Residues 489–526 constitute an intramembrane region (helical); that stretch reads LFLLSYILFLVNVMIGVVLGIWRVVITALFNIVHLGRL. The Cytoplasmic portion of the chain corresponds to 527–670; sequence DISLLNRNVE…KEAESAAASN (144 aa). The interval 600–626 is interaction with calmodulin; sequence VSNAKRARAHWQLLYTLVNNPSLVGSR. The tract at residues 640–670 is disordered; sequence GALSRTSKEGSKKDGSVNEPSKEAESAAASN. The span at 645–664 shows a compositional bias: basic and acidic residues; sequence TSKEGSKKDGSVNEPSKEAE.

Homodimer. Interacts (via C-terminus) with calmodulin.

The protein resides in the cell membrane. In terms of biological role, retinol transporter. Accepts retinol from the extracellular retinol-binding protein rbp4, mediates retinol transport across the cell membrane, and then transmits retinol to the cytoplasmic retinol-binding protein rbp1. Required for normal vitamin A homeostasis. The chain is Receptor for retinol uptake stra6 from Danio rerio (Zebrafish).